A 143-amino-acid polypeptide reads, in one-letter code: Large ribosomal subunit protein uL16 (143 aa).

It belongs to the universal ribosomal protein uL16 family. In terms of assembly, part of the 50S ribosomal subunit.

Binds 23S rRNA and is also seen to make contacts with the A and possibly P site tRNAs. The polypeptide is Large ribosomal subunit protein uL16 (Oenococcus oeni (strain ATCC BAA-331 / PSU-1)).